Here is a 1001-residue protein sequence, read N- to C-terminus: Sarcoplasmic/endoplasmic reticulum calcium ATPase 1 (1001 aa).

The next 4 membrane-spanning stretches (helical) occupy residues 49–69 (LWEL…LLAA), 90–110 (EPFV…WQER), 254–273 (DEFG…AVWL), and 296–313 (FKIA…GLPA). Positions 304, 305, 307, and 309 each coordinate Ca(2+). The active-site 4-aspartylphosphate intermediate is the D351. Mg(2+) contacts are provided by D351 and T353. Position 353 (T353) interacts with ATP. T441 carries the post-translational modification Phosphothreonine. Residues E442, R489, K515, and R560 each contribute to the ATP site. Residue T569 is modified to Phosphothreonine. Position 581 is a phosphoserine (S581). Residues T625, G626, D627, R678, and K684 each coordinate ATP. D703 is a binding site for Mg(2+). N706 lines the ATP pocket. Helical transmembrane passes span 758-777 (KQFI…CIFL), 788-808 (IPVQ…TALG), and 829-851 (ISGW…TVGA). Ca(2+)-binding residues include N768, E771, N796, T799, and D800. Residues 788–808 (IPVQLLWVNLVTDGLPATALG) are interaction with PLN. A disulfide bridge links C876 with C888. The next 3 helical transmembrane spans lie at 898–917 (TMAL…NSLS), 931–949 (IWLL…LILY), and 965–985 (TQWL…EILK). E908 contacts Ca(2+). The segment at 932–943 (WLLGSICLSMSL) is interaction with PLN.

The protein belongs to the cation transport ATPase (P-type) (TC 3.A.3) family. Type IIA subfamily. As to quaternary structure, interacts with sarcolipin (SLN). Interacts with phospholamban (PLN). Interacts with myoregulin (MRLN). Interacts with DWORF. Interacts with VMP1. It depends on Mg(2+) as a cofactor. Skeletal muscle, fast twitch muscle (type II) fibers.

It localises to the endoplasmic reticulum membrane. The protein resides in the sarcoplasmic reticulum membrane. It catalyses the reaction Ca(2+)(in) + ATP + H2O = Ca(2+)(out) + ADP + phosphate + H(+). Inhibited by sarcolipin (SLN) and myoregulin (MRLN). Has also been shown to be reversibly inhibited by phospholamban (PLN) at low calcium concentrations in vitro. Dephosphorylated PLN decreases the apparent affinity of the ATPase for calcium and this inhibition is regulated by the phosphorylation of PLN in vitro. Enhanced by DWORF; DWORF increases activity by displacing sarcolipin (SLN), phospholamban (PLN) and myoregulin (MRLN). Key regulator of striated muscle performance by acting as the major Ca(2+) ATPase responsible for the reuptake of cytosolic Ca(2+) into the sarcoplasmic reticulum. Catalyzes the hydrolysis of ATP coupled with the translocation of calcium from the cytosol to the sarcoplasmic reticulum lumen. Contributes to calcium sequestration involved in muscular excitation/contraction. The protein is Sarcoplasmic/endoplasmic reticulum calcium ATPase 1 of Homo sapiens (Human).